The following is a 344-amino-acid chain: Uroporphyrinogen decarboxylase (344 aa).

Residues 23-27 (RQAGR), D73, Y149, T204, and H321 each bind substrate.

It belongs to the uroporphyrinogen decarboxylase family. In terms of assembly, homodimer.

It is found in the cytoplasm. It catalyses the reaction uroporphyrinogen III + 4 H(+) = coproporphyrinogen III + 4 CO2. It participates in porphyrin-containing compound metabolism; protoporphyrin-IX biosynthesis; coproporphyrinogen-III from 5-aminolevulinate: step 4/4. In terms of biological role, catalyzes the decarboxylation of four acetate groups of uroporphyrinogen-III to yield coproporphyrinogen-III. This Francisella tularensis subsp. holarctica (strain LVS) protein is Uroporphyrinogen decarboxylase.